A 218-amino-acid polypeptide reads, in one-letter code: Uracil-DNA glycosylase (218 aa).

Catalysis depends on D68, which acts as the Proton acceptor.

This sequence belongs to the uracil-DNA glycosylase (UDG) superfamily. UNG family. Homodimer. Interacts with protein OPG148. Component of the Uracil-DNA glycosylase(UDG)-OPG148-polymerase complex; OPG148 and UDG form a heterodimeric processivity factor that associates with OPG71 to form the processive polymerase holoenzyme.

The catalysed reaction is Hydrolyzes single-stranded DNA or mismatched double-stranded DNA and polynucleotides, releasing free uracil.. In terms of biological role, plays an essential role in viral replication as a component of the DNA polymerase processivity factor. Excises uracil residues from the DNA which can arise as a result of misincorporation of dUMP residues by DNA polymerase or due to deamination of cytosine. The sequence is that of Uracil-DNA glycosylase (OPG116) from Bos taurus (Bovine).